The chain runs to 83 residues: Toxin Aam1 (83 aa).

The N-terminal stretch at 1–19 (MNYLVMISLALLLMIGVES) is a signal peptide. The LCN-type CS-alpha/beta domain occupies 21-82 (RDGYIVYPHN…PIYDRSYKCY (62 aa)). Cystine bridges form between Cys-31/Cys-81, Cys-35/Cys-53, Cys-39/Cys-63, and Cys-43/Cys-65.

Belongs to the long (4 C-C) scorpion toxin superfamily. Sodium channel inhibitor family. Alpha subfamily. The C-terminal basic residue is removed by a carboxypeptidase. Expressed by the venom gland.

It is found in the secreted. Its function is as follows. Alpha toxins bind voltage-independently at site-3 of sodium channels (Nav) and inhibit the inactivation of the activated channels, thereby blocking neuronal transmission. This is Toxin Aam1 (H1) from Androctonus amoreuxi (African fattail scorpion).